The following is a 439-amino-acid chain: MSETHLTQQKFADLPLCDEVKQALNENGFEHCTPIQALSLPVLLEKKDIAGQAQTGTGKTLAFLVATFNHLLTTPVPEHRQLNQPRAIVMAPTRELAIQIAKDATLLSKHSGLKVGIVYGGEGYEAQRKVLDKGVDVLIGTTGRIIDYVRQGVINLGAIQAVVLDEADRMFDLGFIKDIRFLFNRMPGAKERLNMLFSATLSMKVQELAYDHMNDPVKVEIAPEEKTSRNIKEEIFYPSMEDKLKLLHSLIEEDWPEKAIVFANTKYQCENLWASLEADGHRVGLLTGDVPQKKRLKILEQFTQSELDILVATDVAARGLHISDVSHVYNYDLPDDCEDYVHRIGRTGRAGQKGVSVSFACEEYALNLPAIEDYIKHSIPVTSYDRDALIDIPPPVKIHRKPHAGGRNLRDRNGSPRPSGSHRSGSGRPPRHDRTRRHS.

The Q motif signature appears at 9–37 (QKFADLPLCDEVKQALNENGFEHCTPIQA). The Helicase ATP-binding domain occupies 40 to 219 (LPVLLEKKDI…YDHMNDPVKV (180 aa)). 53 to 60 (AQTGTGKT) contributes to the ATP binding site. Residues 165-168 (DEAD) carry the DEAD box motif. The region spanning 243–390 (KLKLLHSLIE…VTSYDRDALI (148 aa)) is the Helicase C-terminal domain. A disordered region spans residues 394–439 (PPVKIHRKPHAGGRNLRDRNGSPRPSGSHRSGSGRPPRHDRTRRHS). Low complexity predominate over residues 415–428 (SPRPSGSHRSGSGR). Positions 429–439 (PPRHDRTRRHS) are enriched in basic residues.

The protein belongs to the DEAD box helicase family. RhlB subfamily. As to quaternary structure, component of the RNA degradosome, which is a multiprotein complex involved in RNA processing and mRNA degradation.

It is found in the cytoplasm. It carries out the reaction ATP + H2O = ADP + phosphate + H(+). Functionally, DEAD-box RNA helicase involved in RNA degradation. Has RNA-dependent ATPase activity and unwinds double-stranded RNA. The chain is ATP-dependent RNA helicase RhlB from Shewanella amazonensis (strain ATCC BAA-1098 / SB2B).